The primary structure comprises 371 residues: DNA replication and repair protein RecF (371 aa).

30–37 is a binding site for ATP; it reads GANAQGKT.

The protein belongs to the RecF family.

The protein localises to the cytoplasm. In terms of biological role, the RecF protein is involved in DNA metabolism; it is required for DNA replication and normal SOS inducibility. RecF binds preferentially to single-stranded, linear DNA. It also seems to bind ATP. The sequence is that of DNA replication and repair protein RecF from Lacticaseibacillus paracasei (strain ATCC 334 / BCRC 17002 / CCUG 31169 / CIP 107868 / KCTC 3260 / NRRL B-441) (Lactobacillus paracasei).